A 558-amino-acid chain; its full sequence is Phosphatidylserine lipase ABHD16A (558 aa).

2 consecutive transmembrane segments (helical) span residues 60-80 and 93-113; these read ILALASVFWSISYYSSPFAFF and VVPFSHYAGTLLLLLAGVACL. Over 114 to 558 the chain is Cytoplasmic; it reads RGIGRWTNPQ…AQNFQMPWHL (445 aa). Residues 281 to 407 enclose the AB hydrolase-1 domain; it reads LVICCEGNAG…LVTRTVRQHL (127 aa). Residues Ser-355, Asp-430, and His-507 each act as charge relay system in the active site.

It belongs to the AB hydrolase superfamily. ABHD16 family.

It is found in the membrane. The enzyme catalyses 1-heptadecanoyl-2-(5Z,8Z,11Z,14Z-eicosatetraenoyl)-sn-glycero-3-phosphoserine + H2O = 1-heptadecanoyl-sn-glycero-3-phosphoserine + (5Z,8Z,11Z,14Z)-eicosatetraenoate + H(+). It catalyses the reaction 1-hexadecanoyl-2-(9Z-octadecenoyl)-sn-glycero-3-phospho-L-serine + H2O = 1-hexadecanoyl-sn-glycero-3-phospho-L-serine + (9Z)-octadecenoate + H(+). The catalysed reaction is 1-octadecanoyl-2-(9Z,12Z-octadecadienoyl)-sn-glycero-3-phosphoserine + H2O = 1-octadecanoyl-sn-glycero-3-phosphoserine + (9Z,12Z)-octadecadienoate + H(+). It carries out the reaction 1-heptadecanoyl-2-(5Z,8Z,11Z,14Z-eicosatetraenoyl)-sn-glycero-3-phosphocholine + H2O = 1-heptadecanoyl-sn-glycero-3-phosphocholine + (5Z,8Z,11Z,14Z)-eicosatetraenoate + H(+). The enzyme catalyses 1-hexadecanoyl-2-(9Z-octadecenoyl)-sn-glycero-3-phosphoglycerol + H2O = 1-hexadecanoyl-sn-glycero-3-phosphoglycerol + (9Z)-octadecenoate + H(+). It catalyses the reaction 1-hexadecanoyl-2-(9Z-octadecenoyl)-sn-glycero-3-phospho-(1D-myo-inositol) + H2O = 1-hexadecanoyl-sn-glycero-3-phospho-(1D-myo-inositol) + (9Z)-octadecenoate + H(+). The catalysed reaction is 1-heptadecanoyl-2-(5Z,8Z,11Z,14Z-eicosatetraenoyl)-sn-glycero-3-phosphoethanolamine + H2O = 1-heptadecanoyl-sn-glycero-3-phosphoethanolamine + (5Z,8Z,11Z,14Z)-eicosatetraenoate + H(+). It carries out the reaction 1-hexadecanoyl-2-(9Z-octadecenoyl)-sn-glycero-3-phospho-(1'-sn-glycerol) + H2O = 1-hexadecanoyl-sn-glycero-3-phospho-(1'-sn-glycerol) + (9Z)-octadecenoate + H(+). The enzyme catalyses Hydrolyzes glycerol monoesters of long-chain fatty acids.. It catalyses the reaction 1-tetradecanoylglycerol + H2O = tetradecanoate + glycerol + H(+). The catalysed reaction is 2-hexadecanoylglycerol + H2O = glycerol + hexadecanoate + H(+). It carries out the reaction 1-(9Z-octadecenoyl)-glycerol + H2O = glycerol + (9Z)-octadecenoate + H(+). The enzyme catalyses 2-(9Z-octadecenoyl)-glycerol + H2O = glycerol + (9Z)-octadecenoate + H(+). It catalyses the reaction 2-(9Z,12Z-octadecadienoyl)-glycerol + H2O = (9Z,12Z)-octadecadienoate + glycerol + H(+). The catalysed reaction is 1-(5Z,8Z,11Z,14Z-eicosatetraenoyl)-glycerol + H2O = glycerol + (5Z,8Z,11Z,14Z)-eicosatetraenoate + H(+). It carries out the reaction 2-(5Z,8Z,11Z,14Z-eicosatetraenoyl)-glycerol + H2O = glycerol + (5Z,8Z,11Z,14Z)-eicosatetraenoate + H(+). The enzyme catalyses prostaglandin D2-1-glycerol ester + H2O = prostaglandin D2 + glycerol + H(+). It catalyses the reaction 2-glyceryl-15-deoxy-Delta(12,14)-prostaglandin J2 + H2O = 15-deoxy-Delta(12,14)-prostaglandin J2 + glycerol + H(+). The catalysed reaction is 1-(9Z,12Z-octadecadienoyl)-glycerol + H2O = (9Z,12Z)-octadecadienoate + glycerol + H(+). Its activity is regulated as follows. Inhibited by beta-lactone-based lipid inhibitors, such as beta-lactone palmostatin-B. In terms of biological role, phosphatidylserine (PS) lipase that mediates the hydrolysis of phosphatidylserine to generate lysophosphatidylserine (LPS). LPS constitutes a class of signaling lipids that regulates immunological and neurological processes. Has no activity towards diacylglycerol, triacylglycerol or lysophosphatidylserine lipase. Also has monoacylglycerol lipase activity, with preference for 1-(9Z,12Z-octadecadienoyl)-glycerol (1-LG) and 2-glyceryl-15-deoxy-Delta(12,14)-prostaglandin J2 (15d-PGJ(2)-G). The protein is Phosphatidylserine lipase ABHD16A of Homo sapiens (Human).